A 227-amino-acid chain; its full sequence is Cytochrome c oxidase subunit 2 (227 aa).

Topologically, residues 1 to 22 are mitochondrial intermembrane; that stretch reads MAYPFQLGLQDATSPIMEELMN. Residues 23 to 44 form a helical membrane-spanning segment; it reads FHDHTLMIVFLISSLVLYIISL. At 45–60 the chain is on the mitochondrial matrix side; that stretch reads MLTTKLTHTSTMDAQE. Residues 61 to 81 form a helical membrane-spanning segment; the sequence is VETIWTILPAVILIMIALPSL. Topologically, residues 82-227 are mitochondrial intermembrane; it reads RILYMMDEIN…YFENWSASMI (146 aa). Residues His161, Cys196, Glu198, Cys200, His204, and Met207 each contribute to the Cu cation site. Glu198 is a binding site for Mg(2+). Tyr218 is subject to Phosphotyrosine.

It belongs to the cytochrome c oxidase subunit 2 family. In terms of assembly, component of the cytochrome c oxidase (complex IV, CIV), a multisubunit enzyme composed of 14 subunits. The complex is composed of a catalytic core of 3 subunits MT-CO1, MT-CO2 and MT-CO3, encoded in the mitochondrial DNA, and 11 supernumerary subunits COX4I, COX5A, COX5B, COX6A, COX6B, COX6C, COX7A, COX7B, COX7C, COX8 and NDUFA4, which are encoded in the nuclear genome. The complex exists as a monomer or a dimer and forms supercomplexes (SCs) in the inner mitochondrial membrane with NADH-ubiquinone oxidoreductase (complex I, CI) and ubiquinol-cytochrome c oxidoreductase (cytochrome b-c1 complex, complex III, CIII), resulting in different assemblies (supercomplex SCI(1)III(2)IV(1) and megacomplex MCI(2)III(2)IV(2)). Found in a complex with TMEM177, COA6, COX18, COX20, SCO1 and SCO2. Interacts with TMEM177 in a COX20-dependent manner. Interacts with COX20. Interacts with COX16. The cofactor is Cu cation.

It localises to the mitochondrion inner membrane. The enzyme catalyses 4 Fe(II)-[cytochrome c] + O2 + 8 H(+)(in) = 4 Fe(III)-[cytochrome c] + 2 H2O + 4 H(+)(out). Component of the cytochrome c oxidase, the last enzyme in the mitochondrial electron transport chain which drives oxidative phosphorylation. The respiratory chain contains 3 multisubunit complexes succinate dehydrogenase (complex II, CII), ubiquinol-cytochrome c oxidoreductase (cytochrome b-c1 complex, complex III, CIII) and cytochrome c oxidase (complex IV, CIV), that cooperate to transfer electrons derived from NADH and succinate to molecular oxygen, creating an electrochemical gradient over the inner membrane that drives transmembrane transport and the ATP synthase. Cytochrome c oxidase is the component of the respiratory chain that catalyzes the reduction of oxygen to water. Electrons originating from reduced cytochrome c in the intermembrane space (IMS) are transferred via the dinuclear copper A center (CU(A)) of subunit 2 and heme A of subunit 1 to the active site in subunit 1, a binuclear center (BNC) formed by heme A3 and copper B (CU(B)). The BNC reduces molecular oxygen to 2 water molecules using 4 electrons from cytochrome c in the IMS and 4 protons from the mitochondrial matrix. This chain is Cytochrome c oxidase subunit 2 (Mtco2), found in Mus musculus (Mouse).